The following is a 654-amino-acid chain: Arrestin domain-containing protein C (654 aa).

In terms of domain architecture, C2 spans 1–105 (MTQRSLKINI…AKRNLMDQWL (105 aa)). Positions 616 to 647 (AKRIFLKIQQIQSERQKQQEQQEQQVVSNLEA) form a coiled coil.

Belongs to the arrestin family.

The sequence is that of Arrestin domain-containing protein C (adcC) from Dictyostelium discoideum (Social amoeba).